The primary structure comprises 354 residues: Sulfate/thiosulfate import ATP-binding protein CysA (354 aa).

The 235-residue stretch at 3–237 (IEVRGLSKRF…PATPFVYGFL (235 aa)) folds into the ABC transporter domain. 35–42 (GPSGCGKT) is a binding site for ATP.

Belongs to the ABC transporter superfamily. Sulfate/tungstate importer (TC 3.A.1.6) family. The complex is composed of two ATP-binding proteins (CysA), two transmembrane proteins (CysT and CysW) and a solute-binding protein (CysP).

The protein resides in the cell inner membrane. It carries out the reaction sulfate(out) + ATP + H2O = sulfate(in) + ADP + phosphate + H(+). The catalysed reaction is thiosulfate(out) + ATP + H2O = thiosulfate(in) + ADP + phosphate + H(+). In terms of biological role, part of the ABC transporter complex CysAWTP involved in sulfate/thiosulfate import. Responsible for energy coupling to the transport system. This Bordetella pertussis (strain Tohama I / ATCC BAA-589 / NCTC 13251) protein is Sulfate/thiosulfate import ATP-binding protein CysA.